The chain runs to 225 residues: Putative O-phosphotransferase MT2714 (225 aa).

ATP is bound at residue 30–37; the sequence is GGSSAGKT.

It to S.violaceus chloramphenicol 3-O phosphotransferase.

The chain is Putative O-phosphotransferase MT2714 from Mycobacterium tuberculosis (strain CDC 1551 / Oshkosh).